Consider the following 35-residue polypeptide: Mu-thomitoxin-Hme1c (35 aa).

Cystine bridges form between cysteine 2-cysteine 18, cysteine 9-cysteine 23, and cysteine 17-cysteine 34.

The protein belongs to the neurotoxin 07 (Beta/delta-agtx) family. Expressed by the venom gland.

It is found in the secreted. Its function is as follows. Gating-modifier toxin that inhibits mammalian and insect voltage-gated sodium channels. It shifts the voltage dependence of channel activation to more positive voltages. It shows potent activity on Nav1.4/SCN4A (IC(50)=103 nM), Nav1.5/SCN5A (IC(50)=268 nM) and Para/DmNav1 (IC(50)=555 nM) and lower activities on Nav1.2/SCN2A (IC(50)=1447 nM) and Nav1.6/SCN8A (IC(50)=3504 nM). In addition, at a concentration of 1 uM, the toxin inhibits 90-100% of sodium current through Nav1.2/SCN2A, Nav1.4/SCN4A, Nav1.5/SCN5A, Nav1.6/SCN8A and Para/DmNav1 channels, when the voltage of maximal activation of the channel in control conditions is applied. It binds to the S3-S4 helix-loop-helix motif in the voltage-sensing domain of repeat 1 (shown on hNav1.4/SCN4A). The toxin is amphiphilic and binds to both neutral and negatively charged lipid vesicles with high affinity. The hydrophobic face lies on the opposite side to the hydrophobic faces of classical gating modifiers. In Heriaeus mellotteei (Crab spider), this protein is Mu-thomitoxin-Hme1c.